The following is a 462-amino-acid chain: A-type ATP synthase subunit B (462 aa).

It belongs to the ATPase alpha/beta chains family. Has multiple subunits with at least A(3), B(3), C, D, E, F, H, I and proteolipid K(x).

The protein localises to the cell membrane. Component of the A-type ATP synthase that produces ATP from ADP in the presence of a proton gradient across the membrane. The B chain is a regulatory subunit. The chain is A-type ATP synthase subunit B from Cenarchaeum symbiosum (strain A).